We begin with the raw amino-acid sequence, 191 residues long: Inosine triphosphate pyrophosphatase (191 aa).

15–20 (TGNANK) provides a ligand contact to ITP. E43 contributes to the Mg(2+) binding site. ITP contacts are provided by residues K55, 71–72 (DT), K88, 147–150 (FGWD), K168, and 173–174 (HR).

This sequence belongs to the HAM1 NTPase family. Homodimer. Mg(2+) serves as cofactor. Requires Mn(2+) as cofactor.

The protein localises to the cytoplasm. The protein resides in the nucleus. It carries out the reaction ITP + H2O = IMP + diphosphate + H(+). The enzyme catalyses dITP + H2O = dIMP + diphosphate + H(+). It catalyses the reaction XTP + H2O = XMP + diphosphate + H(+). Pyrophosphatase that hydrolyzes non-canonical purine nucleotides such as inosine triphosphate (ITP), deoxyinosine triphosphate (dITP) or xanthosine 5'-triphosphate (XTP) to their respective monophosphate derivatives. The enzyme does not distinguish between the deoxy- and ribose forms. Probably excludes non-canonical purines from RNA and DNA precursor pools, thus preventing their incorporation into RNA and DNA and avoiding chromosomal lesions. This is Inosine triphosphate pyrophosphatase from Neurospora crassa (strain ATCC 24698 / 74-OR23-1A / CBS 708.71 / DSM 1257 / FGSC 987).